The sequence spans 274 residues: Penicillin-insensitive murein endopeptidase (274 aa).

The N-terminal stretch at Met-1–Ala-19 is a signal peptide. Intrachain disulfides connect Cys-44–Cys-265, Cys-187–Cys-235, and Cys-216–Cys-223. Residues His-110, His-113, Asp-120, Asp-147, His-150, and His-211 each coordinate Zn(2+). The tract at residues Pro-227–Ile-274 is disordered.

The protein belongs to the peptidase M74 family. Dimer. Zn(2+) is required as a cofactor.

Its subcellular location is the periplasm. Its function is as follows. Murein endopeptidase that cleaves the D-alanyl-meso-2,6-diamino-pimelyl amide bond that connects peptidoglycan strands. Likely plays a role in the removal of murein from the sacculus. In Shigella dysenteriae serotype 1 (strain Sd197), this protein is Penicillin-insensitive murein endopeptidase.